The primary structure comprises 75 residues: U14-hexatoxin-Mg1a (75 aa).

The N-terminal stretch at 1-19 (MKLTLFILIVFVVLANVYA) is a signal peptide. Residues 20–31 (AGISERNIIGGR) constitute a propeptide that is removed on maturation.

Post-translationally, contains 4 disulfide bonds. As to expression, expressed by the venom gland.

The protein localises to the secreted. Functionally, no toxicity is observed upon intracranial injection into mice and intrathorax injection into crickets. The sequence is that of U14-hexatoxin-Mg1a from Macrothele gigas (Japanese funnel web spider).